Consider the following 236-residue polypeptide: Biosynthetic peptidoglycan transglycosylase (236 aa).

Residues 12–31 form a helical membrane-spanning segment; it reads ALLWFAAGSVLVVLVLRWVP.

The protein belongs to the glycosyltransferase 51 family.

Its subcellular location is the cell inner membrane. The catalysed reaction is [GlcNAc-(1-&gt;4)-Mur2Ac(oyl-L-Ala-gamma-D-Glu-L-Lys-D-Ala-D-Ala)](n)-di-trans,octa-cis-undecaprenyl diphosphate + beta-D-GlcNAc-(1-&gt;4)-Mur2Ac(oyl-L-Ala-gamma-D-Glu-L-Lys-D-Ala-D-Ala)-di-trans,octa-cis-undecaprenyl diphosphate = [GlcNAc-(1-&gt;4)-Mur2Ac(oyl-L-Ala-gamma-D-Glu-L-Lys-D-Ala-D-Ala)](n+1)-di-trans,octa-cis-undecaprenyl diphosphate + di-trans,octa-cis-undecaprenyl diphosphate + H(+). It functions in the pathway cell wall biogenesis; peptidoglycan biosynthesis. Functionally, peptidoglycan polymerase that catalyzes glycan chain elongation from lipid-linked precursors. The chain is Biosynthetic peptidoglycan transglycosylase from Pseudomonas syringae pv. syringae (strain B728a).